A 378-amino-acid polypeptide reads, in one-letter code: Acetylornithine deacetylase (378 aa).

A Zn(2+)-binding site is contributed by His76. Residue Asp78 is part of the active site. Asp108 provides a ligand contact to Zn(2+). Glu140 is an active-site residue. 3 residues coordinate Zn(2+): Glu141, Glu165, and His351.

Belongs to the peptidase M20A family. ArgE subfamily. As to quaternary structure, homodimer. Zn(2+) is required as a cofactor. Co(2+) serves as cofactor. Requires glutathione as cofactor.

It is found in the cytoplasm. The catalysed reaction is N(2)-acetyl-L-ornithine + H2O = L-ornithine + acetate. Its pathway is amino-acid biosynthesis; L-arginine biosynthesis; L-ornithine from N(2)-acetyl-L-ornithine (linear): step 1/1. Functionally, catalyzes the hydrolysis of the amide bond of N(2)-acetylated L-amino acids. Cleaves the acetyl group from N-acetyl-L-ornithine to form L-ornithine, an intermediate in L-arginine biosynthesis pathway, and a branchpoint in the synthesis of polyamines. This chain is Acetylornithine deacetylase, found in Aliivibrio fischeri (strain ATCC 700601 / ES114) (Vibrio fischeri).